The primary structure comprises 586 residues: Phosphomethylpyrimidine synthase (586 aa).

The segment at 1–33 is disordered; it reads MKQSVSAEQIELKSSLPGSKKVYVDGPREGMKV. Basic and acidic residues predominate over residues 22–33; that stretch reads VYVDGPREGMKV. Substrate contacts are provided by residues asparagine 193, methionine 222, tyrosine 251, histidine 287, 307–309, 348–351, and glutamate 387; these read SRG and DGLR. Histidine 391 provides a ligand contact to Zn(2+). Tyrosine 414 contributes to the substrate binding site. Histidine 455 is a binding site for Zn(2+). Residues cysteine 535, cysteine 538, and cysteine 543 each coordinate [4Fe-4S] cluster.

Belongs to the ThiC family. [4Fe-4S] cluster is required as a cofactor.

The catalysed reaction is 5-amino-1-(5-phospho-beta-D-ribosyl)imidazole + S-adenosyl-L-methionine = 4-amino-2-methyl-5-(phosphooxymethyl)pyrimidine + CO + 5'-deoxyadenosine + formate + L-methionine + 3 H(+). It participates in cofactor biosynthesis; thiamine diphosphate biosynthesis. Catalyzes the synthesis of the hydroxymethylpyrimidine phosphate (HMP-P) moiety of thiamine from aminoimidazole ribotide (AIR) in a radical S-adenosyl-L-methionine (SAM)-dependent reaction. The sequence is that of Phosphomethylpyrimidine synthase from Bacillus cereus (strain G9842).